The following is a 364-amino-acid chain: MGAYLIRRLLLVIPTLWAIITINFFIVQIAPGGPVDQAIAAIEFGNAGVLPGAGGEGVRASHAQTGVGNISDSNYRGGRGLDPEVIAEITHRYGFDKPIHERYFKMLWDYIRFDFGDSLFRSASVLTLIKDSLPVSITLGLWSTLIIYLVSIPLGIRKAVYNGSRFDVWSSAFIIIGYAIPAFLFAILLIVFFAGGSYFDLFPLRGLVSANFDSLPWYQKITDYLWHITLPVLATVIGGFAALTMLTKNSFLDEVRKQYVVTARAKGVSEKNILWKHVFRNAMLLVIAGFPATFISMFFTGSLLIEVMFSLNGLGLLGYEATVSRDYPVMFGTLYIFTLIGLLLNIVSDISYTLVDPRIDFEGR.

Topologically, residues 1-8 (MGAYLIRR) are periplasmic. The helical transmembrane segment at 9 to 29 (LLLVIPTLWAIITINFFIVQI) threads the bilayer. Residues 30-37 (APGGPVDQ) are Cytoplasmic-facing. Residues 38–58 (AIAAIEFGNAGVLPGAGGEGV) traverse the membrane as a helical segment. Topologically, residues 59–135 (RASHAQTGVG…LTLIKDSLPV (77 aa)) are periplasmic. Residues 133–348 (LPVSITLGLW…LIGLLLNIVS (216 aa)) form the ABC transmembrane type-1 domain. A helical membrane pass occupies residues 136-156 (SITLGLWSTLIIYLVSIPLGI). The Cytoplasmic portion of the chain corresponds to 157–172 (RKAVYNGSRFDVWSSA). Residues 173-193 (FIIIGYAIPAFLFAILLIVFF) traverse the membrane as a helical segment. The Periplasmic segment spans residues 194–224 (AGGSYFDLFPLRGLVSANFDSLPWYQKITDY). The helical transmembrane segment at 225–245 (LWHITLPVLATVIGGFAALTM) threads the bilayer. The Cytoplasmic portion of the chain corresponds to 246–284 (LTKNSFLDEVRKQYVVTARAKGVSEKNILWKHVFRNAML). The chain crosses the membrane as a helical span at residues 285 to 305 (LVIAGFPATFISMFFTGSLLI). Residues 306–326 (EVMFSLNGLGLLGYEATVSRD) are Periplasmic-facing. Residues 327–347 (YPVMFGTLYIFTLIGLLLNIV) traverse the membrane as a helical segment. The Cytoplasmic portion of the chain corresponds to 348–364 (SDISYTLVDPRIDFEGR).

The protein belongs to the binding-protein-dependent transport system permease family. OppBC subfamily.

Its subcellular location is the cell inner membrane. In terms of biological role, probably part of a binding-protein-dependent transport system. Probably responsible for the translocation of the substrate across the membrane. This chain is Inner membrane ABC transporter permease protein YejB (yejB), found in Escherichia coli O157:H7.